Consider the following 437-residue polypeptide: Adenylosuccinate synthetase (437 aa).

Residues 12–18 (GDEGKGK) and 40–42 (GHT) contribute to the GTP site. D13 acts as the Proton acceptor in catalysis. 2 residues coordinate Mg(2+): D13 and G40. IMP is bound by residues 13–16 (DEGK), 38–41 (NAGH), T128, R142, Q223, T238, and R302. The Proton donor role is filled by H41. 298–304 (TTTGRRR) contacts substrate. GTP-binding positions include R304, 330 to 332 (KLD), and 412 to 414 (SLG).

The protein belongs to the adenylosuccinate synthetase family. In terms of assembly, homodimer. Mg(2+) serves as cofactor.

The protein localises to the cytoplasm. It carries out the reaction IMP + L-aspartate + GTP = N(6)-(1,2-dicarboxyethyl)-AMP + GDP + phosphate + 2 H(+). Its pathway is purine metabolism; AMP biosynthesis via de novo pathway; AMP from IMP: step 1/2. Plays an important role in the de novo pathway of purine nucleotide biosynthesis. Catalyzes the first committed step in the biosynthesis of AMP from IMP. In Prochlorococcus marinus (strain NATL1A), this protein is Adenylosuccinate synthetase.